We begin with the raw amino-acid sequence, 289 residues long: ATP synthase gamma chain (289 aa).

This sequence belongs to the ATPase gamma chain family. As to quaternary structure, F-type ATPases have 2 components, CF(1) - the catalytic core - and CF(0) - the membrane proton channel. CF(1) has five subunits: alpha(3), beta(3), gamma(1), delta(1), epsilon(1). CF(0) has three main subunits: a, b and c.

It is found in the cell membrane. In terms of biological role, produces ATP from ADP in the presence of a proton gradient across the membrane. The gamma chain is believed to be important in regulating ATPase activity and the flow of protons through the CF(0) complex. The sequence is that of ATP synthase gamma chain from Hamiltonella defensa subsp. Acyrthosiphon pisum (strain 5AT).